A 354-amino-acid chain; its full sequence is tRNA N6-adenosine threonylcarbamoyltransferase (354 aa).

2 residues coordinate Fe cation: His-111 and His-115. Substrate contacts are provided by residues Leu-134–Gly-138, Asp-167, Gly-180, and Asn-279. A Fe cation-binding site is contributed by Asp-319.

Belongs to the KAE1 / TsaD family. It depends on Fe(2+) as a cofactor.

Its subcellular location is the cytoplasm. The catalysed reaction is L-threonylcarbamoyladenylate + adenosine(37) in tRNA = N(6)-L-threonylcarbamoyladenosine(37) in tRNA + AMP + H(+). In terms of biological role, required for the formation of a threonylcarbamoyl group on adenosine at position 37 (t(6)A37) in tRNAs that read codons beginning with adenine. Is involved in the transfer of the threonylcarbamoyl moiety of threonylcarbamoyl-AMP (TC-AMP) to the N6 group of A37, together with TsaE and TsaB. TsaD likely plays a direct catalytic role in this reaction. The chain is tRNA N6-adenosine threonylcarbamoyltransferase from Neisseria meningitidis serogroup B (strain ATCC BAA-335 / MC58).